Consider the following 378-residue polypeptide: Chorismate synthase (378 aa).

NADP(+) is bound at residue Arg-50. FMN contacts are provided by residues 127–129, 255–256, Gly-300, 315–319, and Arg-342; these read RAS, NA, and KPTPS.

The protein belongs to the chorismate synthase family. Requires FMNH2 as cofactor.

It carries out the reaction 5-O-(1-carboxyvinyl)-3-phosphoshikimate = chorismate + phosphate. It functions in the pathway metabolic intermediate biosynthesis; chorismate biosynthesis; chorismate from D-erythrose 4-phosphate and phosphoenolpyruvate: step 7/7. Catalyzes the anti-1,4-elimination of the C-3 phosphate and the C-6 proR hydrogen from 5-enolpyruvylshikimate-3-phosphate (EPSP) to yield chorismate, which is the branch point compound that serves as the starting substrate for the three terminal pathways of aromatic amino acid biosynthesis. This reaction introduces a second double bond into the aromatic ring system. The sequence is that of Chorismate synthase from Methanocaldococcus jannaschii (strain ATCC 43067 / DSM 2661 / JAL-1 / JCM 10045 / NBRC 100440) (Methanococcus jannaschii).